Consider the following 293-residue polypeptide: Forkhead box protein N5 (293 aa).

The segment at 104–152 (TSPPLQLQRQLSNDYSTVEDSEDEAPTSCSDVLTDDDDSYNPWQPKHKR) is disordered. Polar residues predominate over residues 106-119 (PPLQLQRQLSNDYS). The segment at residues 176 to 273 (RPPLNYCNLI…NEMHALSDDL (98 aa)) is a DNA-binding region (fork-head).

Its subcellular location is the nucleus. This Xenopus tropicalis (Western clawed frog) protein is Forkhead box protein N5.